Here is a 466-residue protein sequence, read N- to C-terminus: Ribosome biogenesis protein YTM1 (466 aa).

The tract at residues 8–95 (IKINFFTNEE…EASLNLEYTR (88 aa)) is ubiquitin-like (UBL) domain. The interval 105–466 (SFNNDDWISS…QINKGSDITK (362 aa)) is sufficient for interaction with ERB1 and association with 66S pre-ribosomes. WD repeat units follow at residues 120-159 (PLSA…EKQY), 161-199 (GHSG…NIED), 214-253 (GHKA…MTTI), 291-331 (GHSQ…CVDT), 333-372 (TTGY…TTTE), 381-421 (GHTN…SLYT), and 431-466 (KGQD…DITK).

This sequence belongs to the WD repeat WDR12/YTM1 family. In terms of assembly, component of the NOP7 complex, composed of ERB1, NOP7 and YTM1. The complex is held together by ERB1, which interacts with NOP7 via its N-terminal domain and with YTM1 via a high-affinity interaction between the seven-bladed beta-propeller domains of the 2 proteins. The NOP7 complex associates with the 66S pre-ribosome. Interacts (via UBL domain) with MDN1 (via VWFA/MIDAS domain).

It is found in the nucleus. Its subcellular location is the nucleolus. It localises to the nucleoplasm. Its function is as follows. Component of the NOP7 complex, which is required for maturation of the 25S and 5.8S ribosomal RNAs and formation of the 60S ribosome. The polypeptide is Ribosome biogenesis protein YTM1 (Debaryomyces hansenii (strain ATCC 36239 / CBS 767 / BCRC 21394 / JCM 1990 / NBRC 0083 / IGC 2968) (Yeast)).